Here is a 612-residue protein sequence, read N- to C-terminus: Phosphoenolpyruvate carboxykinase [GTP] (612 aa).

Substrate contacts are provided by residues Arg82 and 221–223 (YGG). Lys230 and His250 together coordinate Mn(2+). Ser272 is a substrate binding site. 273–278 (ACGKTN) is a GTP binding site. The active site involves Cys274. Asp297 is a binding site for Mn(2+). A substrate-binding site is contributed by 388–390 (NSR). Residues Arg390, Arg421, and 516–519 (FGEN) each bind GTP.

The protein belongs to the phosphoenolpyruvate carboxykinase [GTP] family. In terms of assembly, monomer. The cofactor is Mn(2+).

It is found in the cytoplasm. It carries out the reaction oxaloacetate + GTP = phosphoenolpyruvate + GDP + CO2. It functions in the pathway carbohydrate biosynthesis; gluconeogenesis. Catalyzes the conversion of oxaloacetate (OAA) to phosphoenolpyruvate (PEP), the rate-limiting step in the metabolic pathway that produces glucose from lactate and other precursors derived from the citric acid cycle. In Corynebacterium efficiens (strain DSM 44549 / YS-314 / AJ 12310 / JCM 11189 / NBRC 100395), this protein is Phosphoenolpyruvate carboxykinase [GTP].